The primary structure comprises 119 residues: V-type proton ATPase subunit F (119 aa).

This sequence belongs to the V-ATPase F subunit family. As to quaternary structure, V-ATPase is a heteromultimeric enzyme made up of two complexes: the ATP-hydrolytic V1 complex and the proton translocation V0 complex. The V1 complex consists of three catalytic AB heterodimers that form a heterohexamer, three peripheral stalks each consisting of EG heterodimers, one central rotor including subunits D and F, and the regulatory subunits C and H. The proton translocation complex V0 consists of the proton transport subunit a, a ring of proteolipid subunits c9c'', rotary subunit d, subunits e and f, and the accessory subunits ATP6AP1/Ac45 and ATP6AP2/PRR. In terms of tissue distribution, expressed in brain (at protein level).

It localises to the cytoplasmic vesicle. It is found in the secretory vesicle. Its subcellular location is the synaptic vesicle membrane. The protein localises to the clathrin-coated vesicle membrane. Subunit of the V1 complex of vacuolar(H+)-ATPase (V-ATPase), a multisubunit enzyme composed of a peripheral complex (V1) that hydrolyzes ATP and a membrane integral complex (V0) that translocates protons. V-ATPase is responsible for acidifying and maintaining the pH of intracellular compartments and in some cell types, is targeted to the plasma membrane, where it is responsible for acidifying the extracellular environment. In Bos taurus (Bovine), this protein is V-type proton ATPase subunit F (ATP6V1F).